The primary structure comprises 64 residues: Small hydrophobic protein (64 aa).

Over 1 to 20 (MENTSITIEFSSKFWPYFTL) the chain is Intravirion. The tract at residues 6–15 (ITIEFSSKFW) is interaction with host BCAP31. Residues 21-44 (IHMITTIISLLIIISIMIAILNKL) traverse the membrane as a helical; Signal-anchor for type II membrane protein segment. An interaction with small-molecule inhibitor region spans residues 38–43 (IAILNK). At 45–64 (CEYNVFHNKTFELPRARVNT) the chain is on the virion surface side. N-linked (GlcNAc...) asparagine; by host glycosylation is present at N52.

This sequence belongs to the orthopneumovirus small hydrophobic protein family. Homopentamer forming a funnel-like pore. Interacts with glycoprotein G; this interaction occurs on the surface of virion particles and infected cells. Interacts with host BCAP31 (via C-terminus); this interaction is direct. In terms of processing, four species of SH have been detected in infected cell cytoplasm: a 7.5 kDa non-glycosylated form (SH0), a 13-15 kDa form that contains one or two N-linked carbohydrate side chains of the high-mannose type (SHg), a 21-30 kDa polylactosaminoglycan-modified form of the protein (SHp), and the isoform generated by alternative translational initiation. Of these different forms, SH0 is by far the most abundant protein detected during virus infection. Post-translationally, tyrosine phosphorylated.

The protein localises to the virion membrane. It is found in the host cell membrane. The protein resides in the host Golgi apparatus membrane. It localises to the host endoplasmic reticulum membrane. With respect to regulation, channel activity is inhibited by copper. Also inhibited by small-molecule pyronin B. Viroporin that forms a homopentameric ion channel displaying low ion selectivity. May play a role in virus morphogenesis and pathogenicity at various stages of the viral life cycle. Accumulates at the membrane of the Golgi apparatus in infected cells and may facilitate virus release by modifying the secretory pathway. May enhance host membrane permeability and disrupt cellular ion homeostasis, which can be sensed as damage-associated molecular patterns/danger signals, triggering NLRP3 inflammasome activation and inflammatory immune response. Also inhibits host TNFA-mediated signaling pathway and may delay apoptosis, allowing time for the virus to replicate. This chain is Small hydrophobic protein, found in Homo sapiens (Human).